A 78-amino-acid chain; its full sequence is MMSKLGVLLTICLLLFPLFALPQDGDQPADRPAERMQDDISSEQNPLLEKRVGERCCKNGKRGCGRWCRDHSRCCGRR.

Positions 1–22 are cleaved as a signal peptide; sequence MMSKLGVLLTICLLLFPLFALP. The propeptide occupies 23-51; the sequence is QDGDQPADRPAERMQDDISSEQNPLLEKR. The disordered stretch occupies residues 26–46; sequence DQPADRPAERMQDDISSEQNP. Basic and acidic residues predominate over residues 28 to 38; that stretch reads PADRPAERMQD. Cystine bridges form between cysteine 56–cysteine 68, cysteine 57–cysteine 74, and cysteine 64–cysteine 75. Residue cysteine 75 is modified to Cysteine amide.

It belongs to the conotoxin M superfamily. Expressed by the venom duct.

Its subcellular location is the secreted. Its function is as follows. Mu-conotoxins block voltage-gated sodium channels (Nav). This synthetic toxin potently blocks rNav1.4/SCN4A (Kd=0.34-3.6 nM), rNav1.2/SCN2A (Kd=13 nM), rNav1.3/SCN3A (Kd=200 nM), rNav1.1/SCN1A (Kd=360 nM), mNav1.6/SCN8A (IC(50)=1.8 uM), rNav1.5/SCN5A (IC(50)=9 uM), rNav1.6/SCN8A (IC(50)&gt;30 uM). It is noteworthy that the toxin is 50-fold more potent on mouse Nav1.6 than on rat Nav1.6. The block of SCN4A is very slowly reversible. This Conus bullatus (Bubble cone) protein is Mu-conotoxin BuIIIB.